The primary structure comprises 98 residues: Nucleoid-associated protein pc0477 (98 aa).

The protein belongs to the YbaB/EbfC family. As to quaternary structure, homodimer.

The protein resides in the cytoplasm. Its subcellular location is the nucleoid. Binds to DNA and alters its conformation. May be involved in regulation of gene expression, nucleoid organization and DNA protection. This chain is Nucleoid-associated protein pc0477, found in Protochlamydia amoebophila (strain UWE25).